The chain runs to 338 residues: Ketol-acid reductoisomerase (NADP(+)) (338 aa).

The KARI N-terminal Rossmann domain maps to 1 to 181; sequence MKVYYDKDAD…GGTRGGVIET (181 aa). Residues 24–27, arginine 47, and serine 52 each bind NADP(+); that span reads YGSQ. The active site involves histidine 107. Glycine 133 provides a ligand contact to NADP(+). The KARI C-terminal knotted domain maps to 182–327; the sequence is TFKEETETDL…AKLRDMMPWI (146 aa). Positions 190, 194, 226, and 230 each coordinate Mg(2+). Residue serine 251 participates in substrate binding.

Belongs to the ketol-acid reductoisomerase family. Mg(2+) is required as a cofactor.

It carries out the reaction (2R)-2,3-dihydroxy-3-methylbutanoate + NADP(+) = (2S)-2-acetolactate + NADPH + H(+). The enzyme catalyses (2R,3R)-2,3-dihydroxy-3-methylpentanoate + NADP(+) = (S)-2-ethyl-2-hydroxy-3-oxobutanoate + NADPH + H(+). It participates in amino-acid biosynthesis; L-isoleucine biosynthesis; L-isoleucine from 2-oxobutanoate: step 2/4. Its pathway is amino-acid biosynthesis; L-valine biosynthesis; L-valine from pyruvate: step 2/4. Its function is as follows. Involved in the biosynthesis of branched-chain amino acids (BCAA). Catalyzes an alkyl-migration followed by a ketol-acid reduction of (S)-2-acetolactate (S2AL) to yield (R)-2,3-dihydroxy-isovalerate. In the isomerase reaction, S2AL is rearranged via a Mg-dependent methyl migration to produce 3-hydroxy-3-methyl-2-ketobutyrate (HMKB). In the reductase reaction, this 2-ketoacid undergoes a metal-dependent reduction by NADPH to yield (R)-2,3-dihydroxy-isovalerate. In Nitrosomonas europaea (strain ATCC 19718 / CIP 103999 / KCTC 2705 / NBRC 14298), this protein is Ketol-acid reductoisomerase (NADP(+)).